Here is a 615-residue protein sequence, read N- to C-terminus: Isocitrate dehydrogenase kinase/phosphatase (615 aa).

ATP-binding positions include 325 to 331 (APGIKGM) and Lys346. Residue Asp381 is part of the active site.

This sequence belongs to the AceK family.

The protein resides in the cytoplasm. It carries out the reaction L-seryl-[isocitrate dehydrogenase] + ATP = O-phospho-L-seryl-[isocitrate dehydrogenase] + ADP + H(+). In terms of biological role, bifunctional enzyme which can phosphorylate or dephosphorylate isocitrate dehydrogenase (IDH) on a specific serine residue. This is a regulatory mechanism which enables bacteria to bypass the Krebs cycle via the glyoxylate shunt in response to the source of carbon. When bacteria are grown on glucose, IDH is fully active and unphosphorylated, but when grown on acetate or ethanol, the activity of IDH declines drastically concomitant with its phosphorylation. This chain is Isocitrate dehydrogenase kinase/phosphatase, found in Albidiferax ferrireducens (strain ATCC BAA-621 / DSM 15236 / T118) (Rhodoferax ferrireducens).